The chain runs to 275 residues: Phosphonoacetaldehyde hydrolase (275 aa).

Aspartate 15 functions as the Nucleophile in the catalytic mechanism. Mg(2+)-binding residues include aspartate 15 and alanine 17. Catalysis depends on lysine 56, which acts as the Schiff-base intermediate with substrate. Aspartate 189 contacts Mg(2+).

It belongs to the HAD-like hydrolase superfamily. PhnX family. Homodimer. Mg(2+) is required as a cofactor.

It carries out the reaction phosphonoacetaldehyde + H2O = acetaldehyde + phosphate + H(+). Functionally, involved in phosphonate degradation. The chain is Phosphonoacetaldehyde hydrolase from Pseudomonas putida (Arthrobacter siderocapsulatus).